The following is a 271-amino-acid chain: Putative phosphoenolpyruvate synthase regulatory protein (271 aa).

151-158 (GVSRSGKT) contributes to the ADP binding site.

The protein belongs to the pyruvate, phosphate/water dikinase regulatory protein family. PSRP subfamily.

The enzyme catalyses [pyruvate, water dikinase] + ADP = [pyruvate, water dikinase]-phosphate + AMP + H(+). It carries out the reaction [pyruvate, water dikinase]-phosphate + phosphate + H(+) = [pyruvate, water dikinase] + diphosphate. In terms of biological role, bifunctional serine/threonine kinase and phosphorylase involved in the regulation of the phosphoenolpyruvate synthase (PEPS) by catalyzing its phosphorylation/dephosphorylation. This Burkholderia ambifaria (strain MC40-6) protein is Putative phosphoenolpyruvate synthase regulatory protein.